The primary structure comprises 550 residues: Hydroxylamine reductase (550 aa).

4 residues coordinate [2Fe-2S] cluster: Cys-3, Cys-6, Cys-18, and Cys-25. Hybrid [4Fe-2O-2S] cluster is bound by residues His-249, Glu-273, Cys-317, Cys-405, Cys-433, Cys-458, Glu-492, and Lys-494. Cysteine persulfide is present on Cys-405.

The protein belongs to the HCP family. [2Fe-2S] cluster serves as cofactor. The cofactor is hybrid [4Fe-2O-2S] cluster.

The protein localises to the cytoplasm. The enzyme catalyses A + NH4(+) + H2O = hydroxylamine + AH2 + H(+). Its function is as follows. Catalyzes the reduction of hydroxylamine to form NH(3) and H(2)O. The chain is Hydroxylamine reductase from Salmonella enteritidis PT4 (strain P125109).